The chain runs to 376 residues: MASYPGHQHASAFDQAARSRGHSNRRTALRPRRQQEATEVRPEQKMPTLLRVYIDGPHGMGKTTTTQLLVALGSRDDIVYVPEPMTYWRVLGASETIANIYTTQHRLDQGEISAGDAAVVMTSAQITIGMPYAVTDAVLAPHIGGEAGSSHAPPPALTLIFDRHPIAALLCYPAARYLMGSMTPQAVLAFVALIPPTLPGTNIVLGALPEDRHIDRLAKRQRPGERLDLAMLAAIRRVYGLLANTVRYLQGGGSWREDWGQLSGTAVPPQGAEPQSNAGPRPHIGDTLFTLFRAPELLAPNGDLYNVFAWALDVLAKRLRPMHVFILDYDQSPAGCRDALLQLTSGMIQTHVTTPGSIPTICDLARTFAREMGEAN.

The tract at residues 1–44 is disordered; the sequence is MASYPGHQHASAFDQAARSRGHSNRRTALRPRRQQEATEVRPEQ. Residues 19 to 32 are compositionally biased toward basic residues; it reads SRGHSNRRTALRPR. Basic and acidic residues predominate over residues 33-44; the sequence is RQQEATEVRPEQ. 56–63 lines the ATP pocket; that stretch reads GPHGMGKT. Glu83 (proton acceptor) is an active-site residue. Substrate contacts are provided by Tyr101 and Gln125. ATP is bound at residue Arg216. Position 222 (Arg222) interacts with substrate. A disordered region spans residues 260-280; it reads GQLSGTAVPPQGAEPQSNAGP.

This sequence belongs to the herpesviridae thymidine kinase family. Homodimer.

It catalyses the reaction thymidine + ATP = dTMP + ADP + H(+). Catalyzes the transfer of the gamma-phospho group of ATP to thymidine to generate dTMP in the salvage pathway of pyrimidine synthesis. The dTMP serves as a substrate for DNA polymerase during viral DNA replication. Allows the virus to be reactivated and to grow in non-proliferative cells lacking a high concentration of phosphorylated nucleic acid precursors. The protein is Thymidine kinase of Human herpesvirus 1 (strain HFEM) (HHV-1).